Consider the following 229-residue polypeptide: uncharacterized protein (229 aa).

The protein to T.pallidum TP_0315, TP_0618 and TP_0619.

This is an uncharacterized protein from Treponema pallidum (strain Nichols).